Here is a 354-residue protein sequence, read N- to C-terminus: uncharacterized protein (354 aa).

Disordered regions lie at residues 1–74 (MGTK…ENCR) and 87–115 (SESGVCTEPEERGQGGKKSQFLPINQRAS). At K19 the chain carries N6-acetyllysine. The segment covering 32 to 41 (EGPSSNSSFH) has biased composition (low complexity). Over residues 45-54 (EEGTDLEGDM) the composition is skewed to acidic residues. 2 positions are modified to phosphoserine: S115 and S174. A compositionally biased stretch (polar residues) spans 182-199 (QGSSQDLPMQANLSQSNE). 2 disordered regions span residues 182–208 (QGSSQDLPMQANLSQSNEGPLLAGRDR) and 235–298 (QVAD…DELS). Y291 carries the post-translational modification Phosphotyrosine. Phosphoserine is present on S292.

This is an uncharacterized protein from Mus musculus (Mouse).